We begin with the raw amino-acid sequence, 115 residues long: 5-hydroxyisourate hydrolase (115 aa).

The tract at residues methionine 1–arginine 23 is disordered. Positions 7, 45, and 112 each coordinate substrate.

This sequence belongs to the transthyretin family. 5-hydroxyisourate hydrolase subfamily. In terms of assembly, homotetramer.

It catalyses the reaction 5-hydroxyisourate + H2O = 5-hydroxy-2-oxo-4-ureido-2,5-dihydro-1H-imidazole-5-carboxylate + H(+). Its function is as follows. Catalyzes the hydrolysis of 5-hydroxyisourate (HIU) to 2-oxo-4-hydroxy-4-carboxy-5-ureidoimidazoline (OHCU). The polypeptide is 5-hydroxyisourate hydrolase (Caulobacter vibrioides (strain ATCC 19089 / CIP 103742 / CB 15) (Caulobacter crescentus)).